Here is a 569-residue protein sequence, read N- to C-terminus: Arginine--tRNA ligase (569 aa).

The 'HIGH' region signature appears at 123 to 133; the sequence is ANPNGPLHVGH.

Belongs to the class-I aminoacyl-tRNA synthetase family.

The protein localises to the cytoplasm. The enzyme catalyses tRNA(Arg) + L-arginine + ATP = L-arginyl-tRNA(Arg) + AMP + diphosphate. This is Arginine--tRNA ligase from Methanosarcina mazei (strain ATCC BAA-159 / DSM 3647 / Goe1 / Go1 / JCM 11833 / OCM 88) (Methanosarcina frisia).